Here is a 701-residue protein sequence, read N- to C-terminus: Polyribonucleotide nucleotidyltransferase (701 aa).

Mg(2+)-binding residues include D487 and D493. The 60-residue stretch at 554–613 (PTMLQMKIDSDKIRDVIGKGGATIRGICEETKASIDIEDDGSVKIYGETKEAAEAAKLRV) folds into the KH domain. The S1 motif domain occupies 623–691 (GKIYVGKVER…NRGRIKLSIK (69 aa)).

The protein belongs to the polyribonucleotide nucleotidyltransferase family. As to quaternary structure, component of the RNA degradosome, which is a multiprotein complex involved in RNA processing and mRNA degradation. Mg(2+) serves as cofactor.

It is found in the cytoplasm. It catalyses the reaction RNA(n+1) + phosphate = RNA(n) + a ribonucleoside 5'-diphosphate. In terms of biological role, involved in mRNA degradation. Catalyzes the phosphorolysis of single-stranded polyribonucleotides processively in the 3'- to 5'-direction. The protein is Polyribonucleotide nucleotidyltransferase of Pseudomonas aeruginosa (strain LESB58).